A 487-amino-acid chain; its full sequence is Probable cytosol aminopeptidase (487 aa).

Residues Lys-253 and Asp-258 each coordinate Mn(2+). Residue Lys-265 is part of the active site. Asp-277, Asp-337, and Glu-339 together coordinate Mn(2+). Residue Arg-341 is part of the active site.

The protein belongs to the peptidase M17 family. The cofactor is Mn(2+).

It localises to the cytoplasm. The catalysed reaction is Release of an N-terminal amino acid, Xaa-|-Yaa-, in which Xaa is preferably Leu, but may be other amino acids including Pro although not Arg or Lys, and Yaa may be Pro. Amino acid amides and methyl esters are also readily hydrolyzed, but rates on arylamides are exceedingly low.. It catalyses the reaction Release of an N-terminal amino acid, preferentially leucine, but not glutamic or aspartic acids.. Its function is as follows. Presumably involved in the processing and regular turnover of intracellular proteins. Catalyzes the removal of unsubstituted N-terminal amino acids from various peptides. The polypeptide is Probable cytosol aminopeptidase (Parasynechococcus marenigrum (strain WH8102)).